The primary structure comprises 1363 residues: Homeobox protein 13 (1363 aa).

Positions 15-73 (FVMEQIQQQQQQQQQQQQQQQQQQQQQQQQQQQQLQQQQQQQQQQQQQQQQQQQQQQQN) form a coiled coil. 9 disordered regions span residues 66 to 96 (QQQQ…STVP), 120 to 177 (SQHA…INGS), 308 to 437 (INGT…YHGG), 621 to 731 (LNSP…QHQQ), 765 to 818 (HHHH…PQHS), 857 to 911 (SINS…SNSI), 1001 to 1137 (QNYN…TLIN), 1166 to 1202 (NFIN…KRMR), and 1270 to 1341 (ISFG…TLIS). Residues 73–96 (NPKMNNQPNETRLPSPPLLNSTVP) show a composition bias toward polar residues. Residues 132–147 (SLNSSNNNNNNNFNNS) show a composition bias toward low complexity. Residues 148–158 (RPTFSSCSGNS) show a composition bias toward polar residues. Composition is skewed to low complexity over residues 159-177 (NNTT…INGS) and 315-326 (SNHSNNNNNNNN). Basic residues predominate over residues 327–339 (NHHHHHHHHHQKR). The segment covering 348–378 (TNHLTPLPLLHKHTNNNNNINNNNNHNHNNI) has biased composition (low complexity). Residues 379-393 (LGSPNQLNRSQDFTS) show a composition bias toward polar residues. Low complexity-rich tracts occupy residues 394–408 (KNNN…NNKI), 415–426 (NKGSPNQNSSEN), 641–693 (NNNS…NNNI), 709–731 (HHQQ…QHQQ), and 770–793 (QQQQ…SNHN). A coiled-coil region spans residues 738–789 (QQQLQIQYQQQQTHNNNLNQTQQLYYNHHHHQQQQQQQQQQQQHNNNNNNNN). Polar residues-rich tracts occupy residues 794 to 818 (SVLT…PQHS) and 857 to 883 (SINS…QKNR). 3 stretches are compositionally biased toward low complexity: residues 889–911 (ILNS…SNSI), 1001–1031 (QNYN…NNNF), and 1045–1063 (NINN…NNNN). The span at 1064–1078 (KNDKNESEFESKEKL) shows a compositional bias: basic and acidic residues. Polar residues predominate over residues 1081 to 1095 (PFGSSIPNIVNNEQL). Composition is skewed to low complexity over residues 1096–1116 (SPYS…PQWS), 1123–1137 (TSSS…TLIN), and 1166–1177 (NFINNNSNNNNN). The span at 1179 to 1195 (EIDDDDEDGIDGIEGED) shows a compositional bias: acidic residues. The segment at residues 1198-1261 (KKRMRKTTRP…NRRTKDKLKN (64 aa)) is a DNA-binding region (homeobox). A compositionally biased stretch (low complexity) spans 1275 to 1294 (SSTSSTQTSTNSPSSQLSPL). A compositionally biased stretch (polar residues) spans 1297–1316 (NMNNNDQQSISTPSLILSQI). Residues 1317–1334 (NNNQNNNQNNNNNNNTNN) are compositionally biased toward low complexity.

It localises to the nucleus. Putative transcription factor. This is Homeobox protein 13 (hbx13) from Dictyostelium discoideum (Social amoeba).